The sequence spans 432 residues: Adenylosuccinate synthetase (432 aa).

GTP-binding positions include 13–19 (GDEGKGK) and 41–43 (GHT). The active-site Proton acceptor is the aspartate 14. 2 residues coordinate Mg(2+): aspartate 14 and glycine 41. Residues 14 to 17 (DEGK), 39 to 42 (NAGH), threonine 130, arginine 144, glutamine 225, threonine 240, and arginine 304 contribute to the IMP site. Residue histidine 42 is the Proton donor of the active site. Substrate is bound at residue 300–306 (ATTGRRR). Residues arginine 306, 332–334 (KLD), and 415–417 (STG) contribute to the GTP site.

It belongs to the adenylosuccinate synthetase family. In terms of assembly, homodimer. Requires Mg(2+) as cofactor.

Its subcellular location is the cytoplasm. The catalysed reaction is IMP + L-aspartate + GTP = N(6)-(1,2-dicarboxyethyl)-AMP + GDP + phosphate + 2 H(+). It participates in purine metabolism; AMP biosynthesis via de novo pathway; AMP from IMP: step 1/2. Its function is as follows. Plays an important role in the de novo pathway of purine nucleotide biosynthesis. Catalyzes the first committed step in the biosynthesis of AMP from IMP. This is Adenylosuccinate synthetase from Salmonella paratyphi A (strain AKU_12601).